We begin with the raw amino-acid sequence, 529 residues long: Phosphoenolpyruvate carboxykinase (ATP) (529 aa).

Residue R52 participates in substrate binding. R130, N131, and F133 together coordinate Ca(2+). Residues Y191 and K197 each contribute to the substrate site. ATP-binding positions include K197, H216, and 232 to 240 (GLSGTGKTT). Residues K197 and H216 each contribute to the Mn(2+) site. D253 contacts Mn(2+). Residue G267 participates in Ca(2+) binding. ATP-binding positions include E281, R319, 438–439 (RF), F439, and T444. R319 is a substrate binding site.

It belongs to the phosphoenolpyruvate carboxykinase (ATP) family. In terms of assembly, dimer of dimers. The cofactor is Mn(2+).

The protein resides in the cytoplasm. It carries out the reaction oxaloacetate + ATP = phosphoenolpyruvate + ADP + CO2. It participates in carbohydrate biosynthesis; gluconeogenesis. With respect to regulation, allosterically activated by calcium. Involved in gluconeogenesis. Catalyzes the conversion of oxaloacetate (OAA) to phosphoenolpyruvate (PEP) through direct phosphoryl transfer between the nucleoside triphosphate and OAA. In Thermus thermophilus (strain ATCC 27634 / DSM 579 / HB8), this protein is Phosphoenolpyruvate carboxykinase (ATP).